The following is a 57-amino-acid chain: UPF0337 protein SCO0678 (57 aa).

Basic and acidic residues-rich tracts occupy residues 1–22 (MAGN…KEAA) and 42–57 (GDAR…VFRH). Positions 1–57 (MAGNEKSRAKMEQAKGKAKEAAGRAVGNERMTAEGRAAQSKGDARQAKEKGKDVFRH) are disordered.

This sequence belongs to the UPF0337 (CsbD) family.

The polypeptide is UPF0337 protein SCO0678 (Streptomyces coelicolor (strain ATCC BAA-471 / A3(2) / M145)).